Reading from the N-terminus, the 452-residue chain is Gastrin/cholecystokinin type B receptor (452 aa).

Residues 1-55 (MELVKLNRSVQGSGPVASLCRPGGPLLNNSGTGNLSCEPPRIRGAGTRELELAIR) lie on the Extracellular side of the membrane. 3 N-linked (GlcNAc...) asparagine glycosylation sites follow: Asn7, Asn28, and Asn34. The helical transmembrane segment at 56–77 (VTLYAVIFLMSVGGNILIIVVL) threads the bilayer. Over 78-85 (GLSRRLRT) the chain is Cytoplasmic. Residues 86 to 107 (VTNAFLLSLAVSDLLLAVACMP) traverse the membrane as a helical segment. The Extracellular portion of the chain corresponds to 108–129 (FTLLPNLMGTFIFGTVICKAVS). Cys125 and Cys203 form a disulfide bridge. A helical membrane pass occupies residues 130-148 (YLMGVSVSVSTLSLVAIAL). The Cytoplasmic portion of the chain corresponds to 149–168 (ERYSAICRPLQARVWQTRSH). The chain crosses the membrane as a helical span at residues 169-187 (AARVILATWLLSGLLMVPY). Topologically, residues 188-217 (PVYTAVQPVGPRVLQCVHRWPSARVRQTWS) are extracellular. A helical transmembrane segment spans residues 218 to 240 (VLLLLLLFFVPGVVMAVAYGLIS). The Cytoplasmic segment spans residues 241–338 (RELYLGLRFD…KLLAKKRVVR (98 aa)). Residues 255 to 285 (SESQSRVRGQGGLPGGAAPGPVHQNGRCRPE) form a disordered region. Positions 263–272 (GQGGLPGGAA) are enriched in gly residues. Residues 339-360 (MLLVIVVLFFMCWLPVYSANTW) traverse the membrane as a helical segment. Over 361 to 378 (RAFDGPGAHRALSGAPIS) the chain is Extracellular. A helical membrane pass occupies residues 379–399 (FIHLLSYASACVNPLVYCFMH). The Cytoplasmic segment spans residues 400–452 (RRFRQACLDTCARCCPRPPRARPRPLPDEDPPTPSIASLSRLSYTTISTLGPG). Residue Cys413 is the site of S-palmitoyl cysteine attachment.

Belongs to the G-protein coupled receptor 1 family.

The protein localises to the cell membrane. Functionally, receptor for gastrin and cholecystokinin. The CCK-B receptors occur throughout the central nervous system where they modulate anxiety, analgesia, arousal, and neuroleptic activity. This receptor mediates its action by association with G proteins that activate a phosphatidylinositol-calcium second messenger system. This Oryctolagus cuniculus (Rabbit) protein is Gastrin/cholecystokinin type B receptor (CCKBR).